The primary structure comprises 785 residues: LPS-assembly protein LptD (785 aa).

An N-terminal signal peptide occupies residues 1–58 (MSCSCLCMSLYRGADRIGRFYTAHCPQDMALCMHRQKLNPLALALAAAFALNAPAALA).

Belongs to the LptD family. As to quaternary structure, component of the lipopolysaccharide transport and assembly complex. Interacts with LptE and LptA.

It localises to the cell outer membrane. Together with LptE, is involved in the assembly of lipopolysaccharide (LPS) at the surface of the outer membrane. This chain is LPS-assembly protein LptD, found in Chromobacterium violaceum (strain ATCC 12472 / DSM 30191 / JCM 1249 / CCUG 213 / NBRC 12614 / NCIMB 9131 / NCTC 9757 / MK).